A 236-amino-acid chain; its full sequence is Orotidine 5'-phosphate decarboxylase (236 aa).

Substrate-binding positions include Asp-14, Lys-36, 63 to 72 (DLKYHDIPNT), Thr-122, Arg-183, Gln-192, Gly-212, and Arg-213. Catalysis depends on Lys-65, which acts as the Proton donor.

The protein belongs to the OMP decarboxylase family. Type 1 subfamily. In terms of assembly, homodimer.

The catalysed reaction is orotidine 5'-phosphate + H(+) = UMP + CO2. The protein operates within pyrimidine metabolism; UMP biosynthesis via de novo pathway; UMP from orotate: step 2/2. In terms of biological role, catalyzes the decarboxylation of orotidine 5'-monophosphate (OMP) to uridine 5'-monophosphate (UMP). In Halorhodospira halophila (strain DSM 244 / SL1) (Ectothiorhodospira halophila (strain DSM 244 / SL1)), this protein is Orotidine 5'-phosphate decarboxylase.